A 112-amino-acid chain; its full sequence is Small ribosomal subunit protein bS6c (112 aa).

This sequence belongs to the bacterial ribosomal protein bS6 family.

The protein resides in the plastid. The protein localises to the chloroplast. Binds together with bS18 to 16S ribosomal RNA. The polypeptide is Small ribosomal subunit protein bS6c (rps6) (Porphyra purpurea (Red seaweed)).